Here is a 202-residue protein sequence, read N- to C-terminus: Orotate phosphoribosyltransferase (202 aa).

5-phospho-alpha-D-ribose 1-diphosphate contacts are provided by residues Lys-93 and 113 to 121 (EDIITTGGS). Orotate contacts are provided by Thr-117 and Arg-145.

Belongs to the purine/pyrimidine phosphoribosyltransferase family. PyrE subfamily. As to quaternary structure, homodimer. It depends on Mg(2+) as a cofactor.

The catalysed reaction is orotidine 5'-phosphate + diphosphate = orotate + 5-phospho-alpha-D-ribose 1-diphosphate. It functions in the pathway pyrimidine metabolism; UMP biosynthesis via de novo pathway; UMP from orotate: step 1/2. Functionally, catalyzes the transfer of a ribosyl phosphate group from 5-phosphoribose 1-diphosphate to orotate, leading to the formation of orotidine monophosphate (OMP). The polypeptide is Orotate phosphoribosyltransferase (Campylobacter jejuni subsp. doylei (strain ATCC BAA-1458 / RM4099 / 269.97)).